The sequence spans 345 residues: Aminopeptidase YpdE (345 aa).

A divalent metal cation contacts are provided by His62 and Asp166. Residue Glu198 is the Proton acceptor of the active site. Residues Glu199, Asp221, and His308 each coordinate a divalent metal cation.

The protein belongs to the peptidase M42 family. It depends on Co(2+) as a cofactor. Ni(2+) is required as a cofactor. Requires Mn(2+) as cofactor. Cu(2+) serves as cofactor.

In terms of biological role, has a broad aminopeptidase activity on non-blocked peptides by progressively cleaving amino acids off the peptide substrate. Aminopeptidase activity stops at the residue before the first proline in the peptide. Cannot cleave when proline is the first N-terminal residue. The sequence is that of Aminopeptidase YpdE (ypdE) from Escherichia coli (strain K12).